We begin with the raw amino-acid sequence, 289 residues long: MVVKRAEVLGYCSGVRRAVDTVLKLAKENTENKSGLYTFGPLIHNPSTMLRLKQMGVRTIDTENFTEDEDYKDSVIVIRAHGIPPSKKSELEKSGAKVIDATCSRVKASQALAKKHSEEAFVILAGDKNHGELISIAGYAEGKCLIVQNAEEAALIDLPSSLSANGSAVLIAQTTIKESEYEAIASALKKRISDLKVFNTICPATSDRQAALKKLAYEVDALLVIGGKNSANTKRLFQTAVDTKKPAWLIEDASEIPKEIFSYSVIGLTAGASTPDFIIDEVEKKLLEG.

Cys12 serves as a coordination point for [4Fe-4S] cluster. His44 and His81 together coordinate (2E)-4-hydroxy-3-methylbut-2-enyl diphosphate. The dimethylallyl diphosphate site is built by His44 and His81. His44 and His81 together coordinate isopentenyl diphosphate. Cys103 contributes to the [4Fe-4S] cluster binding site. His130 provides a ligand contact to (2E)-4-hydroxy-3-methylbut-2-enyl diphosphate. Position 130 (His130) interacts with dimethylallyl diphosphate. Position 130 (His130) interacts with isopentenyl diphosphate. The active-site Proton donor is the Glu132. Thr174 is a (2E)-4-hydroxy-3-methylbut-2-enyl diphosphate binding site. Cys202 lines the [4Fe-4S] cluster pocket. (2E)-4-hydroxy-3-methylbut-2-enyl diphosphate-binding residues include Ser230, Asn232, and Ser273. Ser230, Asn232, and Ser273 together coordinate dimethylallyl diphosphate. Isopentenyl diphosphate-binding residues include Ser230, Asn232, and Ser273.

It belongs to the IspH family. It depends on [4Fe-4S] cluster as a cofactor.

It catalyses the reaction isopentenyl diphosphate + 2 oxidized [2Fe-2S]-[ferredoxin] + H2O = (2E)-4-hydroxy-3-methylbut-2-enyl diphosphate + 2 reduced [2Fe-2S]-[ferredoxin] + 2 H(+). The enzyme catalyses dimethylallyl diphosphate + 2 oxidized [2Fe-2S]-[ferredoxin] + H2O = (2E)-4-hydroxy-3-methylbut-2-enyl diphosphate + 2 reduced [2Fe-2S]-[ferredoxin] + 2 H(+). The protein operates within isoprenoid biosynthesis; dimethylallyl diphosphate biosynthesis; dimethylallyl diphosphate from (2E)-4-hydroxy-3-methylbutenyl diphosphate: step 1/1. It functions in the pathway isoprenoid biosynthesis; isopentenyl diphosphate biosynthesis via DXP pathway; isopentenyl diphosphate from 1-deoxy-D-xylulose 5-phosphate: step 6/6. In terms of biological role, catalyzes the conversion of 1-hydroxy-2-methyl-2-(E)-butenyl 4-diphosphate (HMBPP) into a mixture of isopentenyl diphosphate (IPP) and dimethylallyl diphosphate (DMAPP). Acts in the terminal step of the DOXP/MEP pathway for isoprenoid precursor biosynthesis. This is 4-hydroxy-3-methylbut-2-enyl diphosphate reductase from Treponema denticola (strain ATCC 35405 / DSM 14222 / CIP 103919 / JCM 8153 / KCTC 15104).